Here is a 347-residue protein sequence, read N- to C-terminus: MKILGIETTCDETAAAVVTLGEDERGQILANEVLSQIAEHAAYGGVVPEIAARAHVEVLDRLIARALQRAGTTLKEIDGIAVAAGPGLIGGVLIGLVTAKTLALVARKPLLAVNHLEAHALTPRLTDGLAFPYLLLLASGGHTQLVAVKGVGDYVRLGTTIDDAIGEAFDKVAKLLGLGYPGGPEVERQAESGNPERFALPRPMIGRRQADFSLSGLKTALRIEAERLEPLASQDVADLCASFQAAVVDVVVDRVRVALRAFAGVAGHPTALVAAGGVAANGAIRRALAAQAGEVGLSFVAPPLPLCGDNGAMIAWAGLERLRLGLVDDLTVPARARWPFAEVAPAA.

Fe cation is bound by residues H115 and H119. Substrate is bound by residues L137–G141, D170, G183, and N281. D309 contributes to the Fe cation binding site.

The protein belongs to the KAE1 / TsaD family. Fe(2+) is required as a cofactor.

The protein resides in the cytoplasm. It carries out the reaction L-threonylcarbamoyladenylate + adenosine(37) in tRNA = N(6)-L-threonylcarbamoyladenosine(37) in tRNA + AMP + H(+). Required for the formation of a threonylcarbamoyl group on adenosine at position 37 (t(6)A37) in tRNAs that read codons beginning with adenine. Is involved in the transfer of the threonylcarbamoyl moiety of threonylcarbamoyl-AMP (TC-AMP) to the N6 group of A37, together with TsaE and TsaB. TsaD likely plays a direct catalytic role in this reaction. This Methylorubrum extorquens (strain CM4 / NCIMB 13688) (Methylobacterium extorquens) protein is tRNA N6-adenosine threonylcarbamoyltransferase.